The sequence spans 393 residues: Formate-dependent phosphoribosylglycinamide formyltransferase (393 aa).

N(1)-(5-phospho-beta-D-ribosyl)glycinamide is bound by residues 22–23 (EL) and E82. ATP contacts are provided by residues R114, K155, 160–165 (SSGKGQ), 195–198 (EGLV), and E203. Residues 119 to 308 (RLAAETLQLP…EFALHVRAFL (190 aa)) form the ATP-grasp domain. Mg(2+) is bound by residues E267 and E279. N(1)-(5-phospho-beta-D-ribosyl)glycinamide contacts are provided by residues D286, K355, and 362–363 (RR).

This sequence belongs to the PurK/PurT family. As to quaternary structure, homodimer.

The enzyme catalyses N(1)-(5-phospho-beta-D-ribosyl)glycinamide + formate + ATP = N(2)-formyl-N(1)-(5-phospho-beta-D-ribosyl)glycinamide + ADP + phosphate + H(+). It participates in purine metabolism; IMP biosynthesis via de novo pathway; N(2)-formyl-N(1)-(5-phospho-D-ribosyl)glycinamide from N(1)-(5-phospho-D-ribosyl)glycinamide (formate route): step 1/1. Functionally, involved in the de novo purine biosynthesis. Catalyzes the transfer of formate to 5-phospho-ribosyl-glycinamide (GAR), producing 5-phospho-ribosyl-N-formylglycinamide (FGAR). Formate is provided by PurU via hydrolysis of 10-formyl-tetrahydrofolate. This chain is Formate-dependent phosphoribosylglycinamide formyltransferase, found in Yersinia pseudotuberculosis serotype O:3 (strain YPIII).